A 546-amino-acid chain; its full sequence is MAAKDVRFSADARDKMLRGVDILADAVKVTLGPKGRNVVIEKSFGAPRITKDGVTVAKEIELADKFENMGAQMVREVASKTNDIAGDGTTTATVLAQAIVREGAKFVAAGINPMDLKRGIDLATQAAVKDITARAKKVASSEEVAQVGTISANGDKEIGEMIAHAMQKVGNEGVITVEEAKTAETELDVVEGMQFDRGYLSPYFVTNAEKMVAELEDPYILIHEKKLSSLQPMLPVLEAVVQTGKPLLIIAEDIEGEALATLVVNKLRGGLKVAAVKAPGFGDRRKAMLEDIAILTKGQTISEDLGIKLENVALPMLGRAKRVRIEKENTTIIDGLGEKADIEARVGQIKAQIEETTSDYDREKLQERLAKLAGGVAVIRVGGATEVEVKEKKDRVDDALNATRAAVEEGIVPGGGTALLRAKKAVAELKSDVPDVQAGIKIVLKALEAPIRQIAQNAGVEGSIVVGKITDNTGSETYGFNAQTEEYVDMIQSGIVDPAKVVRTALQDAASVAGLLVTTEAMVADAPKKDSPAPAMPGGGMGGMDF.

Residues 30–33 (TLGP), K51, 87–91 (DGTTT), G415, and D497 contribute to the ATP site. The segment at 527 to 546 (PKKDSPAPAMPGGGMGGMDF) is disordered. The span at 537–546 (PGGGMGGMDF) shows a compositional bias: gly residues.

This sequence belongs to the chaperonin (HSP60) family. In terms of assembly, forms a cylinder of 14 subunits composed of two heptameric rings stacked back-to-back. Interacts with the co-chaperonin GroES.

It localises to the cytoplasm. It catalyses the reaction ATP + H2O + a folded polypeptide = ADP + phosphate + an unfolded polypeptide.. In terms of biological role, together with its co-chaperonin GroES, plays an essential role in assisting protein folding. The GroEL-GroES system forms a nano-cage that allows encapsulation of the non-native substrate proteins and provides a physical environment optimized to promote and accelerate protein folding. In Methylorubrum populi (strain ATCC BAA-705 / NCIMB 13946 / BJ001) (Methylobacterium populi), this protein is Chaperonin GroEL.